The following is a 43-amino-acid chain: Avenin-F (43 aa).

The tract at residues 1–23 is disordered; it reads TTTVQYDPSEQYQPYPEQQEPFV. The span at 10 to 23 shows a compositional bias: low complexity; the sequence is EQYQPYPEQQEPFV. Repeat unit 1 spans residues 21–26; sequence PFVQQQ. Residues 21-40 are 3 X 6 aa tandem repeats of P-F-V-Q-Q-Q; the sequence is PFVQQQPPFVQQQQPFVQQQ. One copy of the 2; approximate repeat lies at 27 to 34; it reads PPFVQQQQ. The stretch at 35–40 is repeat 3; it reads PFVQQQ.

The protein belongs to the gliadin/glutenin family. As to quaternary structure, monomer.

The protein resides in the vacuole. It localises to the aleurone grain. Its function is as follows. Seed storage protein. Serves as a source of nitrogen, carbon, and sulfur for the young developing seedling. The protein is Avenin-F of Avena sativa (Oat).